The following is a 142-amino-acid chain: MASLRHRVRAIALQILFELDATDHPPDQVVGRRLEEEQLPPEGERFLRRLVFGAWEHAAHLDRIIEEAAPNWPVSQMPGVDKAILRIALFEALIDKEEKTPLKAIINEAVELAKQYGSDNSSRFVNGVLGTVVSRYRERSKG.

It belongs to the NusB family.

In terms of biological role, involved in transcription antitermination. Required for transcription of ribosomal RNA (rRNA) genes. Binds specifically to the boxA antiterminator sequence of the ribosomal RNA (rrn) operons. In Roseiflexus castenholzii (strain DSM 13941 / HLO8), this protein is Transcription antitermination protein NusB.